Consider the following 540-residue polypeptide: Phosphoenolpyruvate carboxykinase (ATP) (540 aa).

Arg65 serves as a coordination point for substrate. Lys87 bears the N6-acetyllysine mark. Tyr207 and Lys213 together coordinate substrate. ATP contacts are provided by residues Lys213, His232, and 248–256 (GLSGTGKTT). Residues Lys213 and His232 each contribute to the Mn(2+) site. Asp269 lines the Mn(2+) pocket. ATP contacts are provided by residues Glu297, Arg333, 449 to 450 (RI), and Thr455. Arg333 is a binding site for substrate. The residue at position 523 (Lys523) is an N6-acetyllysine.

Belongs to the phosphoenolpyruvate carboxykinase (ATP) family. Monomer. The cofactor is Mn(2+).

Its subcellular location is the cytoplasm. It catalyses the reaction oxaloacetate + ATP = phosphoenolpyruvate + ADP + CO2. The protein operates within carbohydrate biosynthesis; gluconeogenesis. Involved in the gluconeogenesis. Catalyzes the conversion of oxaloacetate (OAA) to phosphoenolpyruvate (PEP) through direct phosphoryl transfer between the nucleoside triphosphate and OAA. In Shigella flexneri serotype 5b (strain 8401), this protein is Phosphoenolpyruvate carboxykinase (ATP).